A 74-amino-acid polypeptide reads, in one-letter code: Putative membrane protein insertion efficiency factor (74 aa).

This sequence belongs to the UPF0161 family.

The protein resides in the cell membrane. Functionally, could be involved in insertion of integral membrane proteins into the membrane. The polypeptide is Putative membrane protein insertion efficiency factor (Anoxybacillus flavithermus (strain DSM 21510 / WK1)).